We begin with the raw amino-acid sequence, 200 residues long: Dephospho-CoA kinase (200 aa).

In terms of domain architecture, DPCK spans 4–200; that stretch reads VIGLTGGIAS…VILKNWNIID (197 aa). ATP is bound at residue 12–17; that stretch reads ASGKST.

This sequence belongs to the CoaE family.

It localises to the cytoplasm. It carries out the reaction 3'-dephospho-CoA + ATP = ADP + CoA + H(+). The protein operates within cofactor biosynthesis; coenzyme A biosynthesis; CoA from (R)-pantothenate: step 5/5. Catalyzes the phosphorylation of the 3'-hydroxyl group of dephosphocoenzyme A to form coenzyme A. This chain is Dephospho-CoA kinase, found in Bacillus cereus (strain ATCC 10987 / NRS 248).